Consider the following 119-residue polypeptide: Protein yippee-like 3 (119 aa).

Residues 19–116 (RRYSCAHCRA…IELNHMIKDN (98 aa)) enclose the Yippee domain. Zn(2+) contacts are provided by C23, C26, C79, and C82.

It belongs to the yippee family. Post-translationally, probably ubiquitinated leading to its degradation by the proteasome.

Its subcellular location is the nucleus. It is found in the nucleolus. Functionally, involved in proliferation and apoptosis in myeloid precursor cells. In Bos taurus (Bovine), this protein is Protein yippee-like 3 (YPEL3).